We begin with the raw amino-acid sequence, 89 residues long: U-scoloptoxin(12)-Er1a (89 aa).

Residues 1–22 (MKGLFLVVFLMWFVSQMNTEET) form the signal peptide.

This sequence belongs to the scoloptoxin-12 family. Contains 3 disulfide bonds. As to expression, expressed by the venom gland.

The protein localises to the secreted. The chain is U-scoloptoxin(12)-Er1a from Ethmostigmus rubripes (Giant centipede).